Here is a 212-residue protein sequence, read N- to C-terminus: MSLENQTQKERLCAVIRQLHTQGKSPATSTNYSFLDEDQVIFVSRSGVDKSQFQPEDFIAVDTMGLPLPPDEGIKPSAETLIHCFIYQNFPGITCVLHTHSVAATLLSGIFAAKQAVTFSGYEVIKGIAGQTTHETAIALPIFANDQDMKSFCQQLAQRQEELNNYGFLIAKHGLYAWGETMAIAKRHLEVWEFMLECELEQLKITPPLAAR.

Positions 98 and 100 each coordinate Zn(2+).

Belongs to the aldolase class II family. MtnB subfamily. Zn(2+) is required as a cofactor.

It catalyses the reaction 5-(methylsulfanyl)-D-ribulose 1-phosphate = 5-methylsulfanyl-2,3-dioxopentyl phosphate + H2O. It participates in amino-acid biosynthesis; L-methionine biosynthesis via salvage pathway; L-methionine from S-methyl-5-thio-alpha-D-ribose 1-phosphate: step 2/6. Catalyzes the dehydration of methylthioribulose-1-phosphate (MTRu-1-P) into 2,3-diketo-5-methylthiopentyl-1-phosphate (DK-MTP-1-P). The protein is Methylthioribulose-1-phosphate dehydratase of Picosynechococcus sp. (strain ATCC 27264 / PCC 7002 / PR-6) (Agmenellum quadruplicatum).